Reading from the N-terminus, the 192-residue chain is Lipid A acyltransferase PagP (192 aa).

Positions 1–29 (MVVNVVIVAKKYFLFITLLIIQVSLPAHA) are cleaved as a signal peptide. Residues histidine 64, aspartate 107, and serine 108 contribute to the active site.

This sequence belongs to the lipid A palmitoyltransferase family. As to quaternary structure, homodimer.

The protein resides in the cell outer membrane. It carries out the reaction a lipid A + a 1,2-diacyl-sn-glycero-3-phosphocholine = a hepta-acyl lipid A + a 2-acyl-sn-glycero-3-phosphocholine. The enzyme catalyses a lipid IVA + a 1,2-diacyl-sn-glycero-3-phosphocholine = a lipid IVB + a 2-acyl-sn-glycero-3-phosphocholine. It catalyses the reaction a lipid IIA + a 1,2-diacyl-sn-glycero-3-phosphocholine = a lipid IIB + a 2-acyl-sn-glycero-3-phosphocholine. Transfers a fatty acid residue from the sn-1 position of a phospholipid to the N-linked hydroxyfatty acid chain on the proximal unit of lipid A or its precursors. The sequence is that of Lipid A acyltransferase PagP from Citrobacter rodentium (strain ICC168) (Citrobacter freundii biotype 4280).